A 428-amino-acid polypeptide reads, in one-letter code: Glutamate-1-semialdehyde 2,1-aminomutase (428 aa).

The residue at position 267 (K267) is an N6-(pyridoxal phosphate)lysine.

Belongs to the class-III pyridoxal-phosphate-dependent aminotransferase family. HemL subfamily. Homodimer. Pyridoxal 5'-phosphate is required as a cofactor.

The protein localises to the cytoplasm. The catalysed reaction is (S)-4-amino-5-oxopentanoate = 5-aminolevulinate. Its pathway is porphyrin-containing compound metabolism; protoporphyrin-IX biosynthesis; 5-aminolevulinate from L-glutamyl-tRNA(Glu): step 2/2. The protein is Glutamate-1-semialdehyde 2,1-aminomutase of Sulfurihydrogenibium sp. (strain YO3AOP1).